We begin with the raw amino-acid sequence, 622 residues long: Low affinity potassium transport system protein Kup (622 aa).

A run of 12 helical transmembrane segments spans residues 9–29 (LPAITLAAIGVVYGDIGTSPL), 49–69 (VFGFLSLIFWLLIFVVSIKYL), 103–123 (VIMGLIGGSFFYGEVVITPAI), 137–157 (PQLDTWIVPLSIIVLTLLFMI), 165–185 (VGKLFAPIMLTWFLILAGLGL), 213–233 (VSFIALGAVVLSITGGEVLYA), 247–267 (WFTVVLPSLTLNYFGQGALLL), 276–296 (PFFLLAPDWALIPLLIIAALA), 337–357 (IYIPFVNWMLYVAVVIVIVSF), 363–383 (LAAAYGIAVTGTMVLTSILST), 396–416 (FVALILIAFLCVDIPLFTANL), and 419–439 (LLSGGWLPLSLGTVMFIVMTT).

The protein belongs to the HAK/KUP transporter (TC 2.A.72) family.

Its subcellular location is the cell inner membrane. It catalyses the reaction K(+)(in) + H(+)(in) = K(+)(out) + H(+)(out). In terms of biological role, responsible for the low-affinity transport of potassium into the cell. Likely operates as a K(+):H(+) symporter. The polypeptide is Low affinity potassium transport system protein Kup (Shigella flexneri).